Consider the following 336-residue polypeptide: Quinolinate synthase (336 aa).

Residues H25 and S42 each contribute to the iminosuccinate site. [4Fe-4S] cluster is bound at residue C86. Residues 117 to 119 (YIN) and S138 each bind iminosuccinate. C198 contacts [4Fe-4S] cluster. Residues 224–226 (HPE) and T241 each bind iminosuccinate. Residue C288 coordinates [4Fe-4S] cluster.

It belongs to the quinolinate synthase family. Type 3 subfamily. It depends on [4Fe-4S] cluster as a cofactor.

It localises to the cytoplasm. It carries out the reaction iminosuccinate + dihydroxyacetone phosphate = quinolinate + phosphate + 2 H2O + H(+). Its pathway is cofactor biosynthesis; NAD(+) biosynthesis; quinolinate from iminoaspartate: step 1/1. In terms of biological role, catalyzes the condensation of iminoaspartate with dihydroxyacetone phosphate to form quinolinate. In Helicobacter pylori (strain HPAG1), this protein is Quinolinate synthase.